An 805-amino-acid polypeptide reads, in one-letter code: Phenylalanine--tRNA ligase beta subunit (805 aa).

In terms of domain architecture, tRNA-binding spans Ala39 to Arg148. Residues Pro399–Asp474 enclose the B5 domain. 4 residues coordinate Mg(2+): Asp452, Asp458, Glu461, and Glu462. Residues Ser703–Arg804 form the FDX-ACB domain.

It belongs to the phenylalanyl-tRNA synthetase beta subunit family. Type 1 subfamily. Tetramer of two alpha and two beta subunits. It depends on Mg(2+) as a cofactor.

The protein resides in the cytoplasm. The enzyme catalyses tRNA(Phe) + L-phenylalanine + ATP = L-phenylalanyl-tRNA(Phe) + AMP + diphosphate + H(+). This is Phenylalanine--tRNA ligase beta subunit from Bordetella bronchiseptica (strain ATCC BAA-588 / NCTC 13252 / RB50) (Alcaligenes bronchisepticus).